The following is a 190-amino-acid chain: Potassium-transporting ATPase KdpC subunit (190 aa).

The chain crosses the membrane as a helical span at residues 10–30; sequence LLVFLTILTGGVYPLATTVLG.

Belongs to the KdpC family. The system is composed of three essential subunits: KdpA, KdpB and KdpC.

It is found in the cell inner membrane. In terms of biological role, part of the high-affinity ATP-driven potassium transport (or Kdp) system, which catalyzes the hydrolysis of ATP coupled with the electrogenic transport of potassium into the cytoplasm. This subunit acts as a catalytic chaperone that increases the ATP-binding affinity of the ATP-hydrolyzing subunit KdpB by the formation of a transient KdpB/KdpC/ATP ternary complex. The polypeptide is Potassium-transporting ATPase KdpC subunit (Cronobacter sakazakii (strain ATCC BAA-894) (Enterobacter sakazakii)).